Reading from the N-terminus, the 152-residue chain is Protein-export protein SecB (152 aa).

Belongs to the SecB family. In terms of assembly, homotetramer, a dimer of dimers. One homotetramer interacts with 1 SecA dimer.

Its subcellular location is the cytoplasm. In terms of biological role, one of the proteins required for the normal export of preproteins out of the cell cytoplasm. It is a molecular chaperone that binds to a subset of precursor proteins, maintaining them in a translocation-competent state. It also specifically binds to its receptor SecA. This is Protein-export protein SecB from Rickettsia africae (strain ESF-5).